A 651-amino-acid polypeptide reads, in one-letter code: DNA mismatch repair protein MutL (651 aa).

The disordered stretch occupies residues 383-405; sequence TAAEEPTPAPTSPDLEIGDLDDQ.

The protein belongs to the DNA mismatch repair MutL/HexB family.

Functionally, this protein is involved in the repair of mismatches in DNA. It is required for dam-dependent methyl-directed DNA mismatch repair. May act as a 'molecular matchmaker', a protein that promotes the formation of a stable complex between two or more DNA-binding proteins in an ATP-dependent manner without itself being part of a final effector complex. The protein is DNA mismatch repair protein MutL of Lacticaseibacillus casei (strain BL23) (Lactobacillus casei).